The primary structure comprises 337 residues: 4-hydroxy-2-oxovalerate aldolase (337 aa).

The 251-residue stretch at 6-256 (IRIMDTTLRD…ETGIDLFQIM (251 aa)) folds into the Pyruvate carboxyltransferase domain. Substrate is bound at residue 14-15 (RD). Asp15 provides a ligand contact to Mn(2+). The Proton acceptor role is filled by His18. Ser168 and His195 together coordinate substrate. Positions 195 and 197 each coordinate Mn(2+). Tyr286 is a substrate binding site.

This sequence belongs to the 4-hydroxy-2-oxovalerate aldolase family.

The enzyme catalyses (S)-4-hydroxy-2-oxopentanoate = acetaldehyde + pyruvate. The chain is 4-hydroxy-2-oxovalerate aldolase (nahM) from Geobacillus genomosp. 3.